The sequence spans 97 residues: Down syndrome critical region protein 8 (97 aa).

As to expression, expressed in numerous tissues; not found in breast, heart, small intestine and liver. Isoform 1: Predominantly expressed in the testis. Isoform 3: Predominantly expressed in the testis, at lower level in the placenta, during malignant progression of melanocytic tumors and in several tumors of varying origins. Isoform 4: Predominantly expressed in the testis, at lower level in the placenta, during malignant progression of melanocytic tumors and in several tumors of varying origins. Isoform 5: Predominantly expressed in the testis. Isoform 6: Predominantly expressed in the testis.

The polypeptide is Down syndrome critical region protein 8 (Homo sapiens (Human)).